The sequence spans 419 residues: GTPase Obg (419 aa).

The region spanning M1 to M156 is the Obg domain. One can recognise an OBG-type G domain in the interval A157–I334. GTP-binding positions include G163–S170, F188–A192, D209–G212, N278–D281, and N315–I317. 2 residues coordinate Mg(2+): S170 and T190. The region spanning I342–N419 is the OCT domain.

It belongs to the TRAFAC class OBG-HflX-like GTPase superfamily. OBG GTPase family. As to quaternary structure, monomer. Mg(2+) is required as a cofactor.

The protein resides in the cytoplasm. Functionally, an essential GTPase which binds GTP, GDP and possibly (p)ppGpp with moderate affinity, with high nucleotide exchange rates and a fairly low GTP hydrolysis rate. Plays a role in control of the cell cycle, stress response, ribosome biogenesis and in those bacteria that undergo differentiation, in morphogenesis control. This Mesomycoplasma hyopneumoniae (strain J / ATCC 25934 / NCTC 10110) (Mycoplasma hyopneumoniae) protein is GTPase Obg.